We begin with the raw amino-acid sequence, 365 residues long: Isopentenyl-diphosphate delta-isomerase (365 aa).

8–9 (RK) is a substrate binding site. FMN-binding positions include 67 to 69 (SIT), S97, and N126. Residue 97–99 (SQR) coordinates substrate. Residue Q160 coordinates substrate. Mg(2+) is bound at residue E161. FMN is bound by residues K192, T222, 272–274 (GVR), and 293–294 (AL).

Belongs to the IPP isomerase type 2 family. Homooctamer. Dimer of tetramers. Requires FMN as cofactor. It depends on NADPH as a cofactor. The cofactor is Mg(2+).

Its subcellular location is the cytoplasm. It carries out the reaction isopentenyl diphosphate = dimethylallyl diphosphate. Involved in the biosynthesis of isoprenoids. Catalyzes the 1,3-allylic rearrangement of the homoallylic substrate isopentenyl (IPP) to its allylic isomer, dimethylallyl diphosphate (DMAPP). The polypeptide is Isopentenyl-diphosphate delta-isomerase (Methanosarcina acetivorans (strain ATCC 35395 / DSM 2834 / JCM 12185 / C2A)).